The sequence spans 156 residues: Ribosomal RNA large subunit methyltransferase H (156 aa).

S-adenosyl-L-methionine is bound by residues L73, G104, and 123-128 (LSALTL).

Belongs to the RNA methyltransferase RlmH family. Homodimer.

It is found in the cytoplasm. The enzyme catalyses pseudouridine(1915) in 23S rRNA + S-adenosyl-L-methionine = N(3)-methylpseudouridine(1915) in 23S rRNA + S-adenosyl-L-homocysteine + H(+). Functionally, specifically methylates the pseudouridine at position 1915 (m3Psi1915) in 23S rRNA. The protein is Ribosomal RNA large subunit methyltransferase H of Shewanella woodyi (strain ATCC 51908 / MS32).